Consider the following 213-residue polypeptide: Orotate phosphoribosyltransferase (213 aa).

Lysine 26 contacts 5-phospho-alpha-D-ribose 1-diphosphate. 34 to 35 (FF) contributes to the orotate binding site. 5-phospho-alpha-D-ribose 1-diphosphate-binding positions include 72–73 (YK), arginine 99, lysine 100, lysine 103, histidine 105, and 124–132 (DDVITAGTA). Orotate is bound by residues threonine 128 and arginine 156.

This sequence belongs to the purine/pyrimidine phosphoribosyltransferase family. PyrE subfamily. In terms of assembly, homodimer. The cofactor is Mg(2+).

The catalysed reaction is orotidine 5'-phosphate + diphosphate = orotate + 5-phospho-alpha-D-ribose 1-diphosphate. Its pathway is pyrimidine metabolism; UMP biosynthesis via de novo pathway; UMP from orotate: step 1/2. In terms of biological role, catalyzes the transfer of a ribosyl phosphate group from 5-phosphoribose 1-diphosphate to orotate, leading to the formation of orotidine monophosphate (OMP). This is Orotate phosphoribosyltransferase from Vibrio cholerae serotype O1 (strain ATCC 39315 / El Tor Inaba N16961).